The following is a 372-amino-acid chain: Zinc finger protein dpff-1 (372 aa).

The disordered stretch occupies residues 108–204; it reads VGPTTESVSD…SRSIVKETKY (97 aa). The span at 109–131 shows a compositional bias: polar residues; the sequence is GPTTESVSDSSNDSTTIRPSRQT. Residues 132 to 141 show a composition bias toward basic and acidic residues; that stretch reads QIKEEYRDDY. The span at 142–158 shows a compositional bias: acidic residues; that stretch reads VLDDELSPDEFGSDEDD. Over residues 184–196 the composition is skewed to polar residues; the sequence is TTRSSVSRLTPSR. The segment at 212-235 adopts a C2H2-type zinc-finger fold; that stretch reads YPCDKCSAKYKSLAGLSYHQSYLH. PHD-type zinc fingers lie at residues 256–314 and 316–361; these read SCDF…CKSC and ICGT…CQVE.

It belongs to the requiem/DPF family.

The protein resides in the nucleus. It is found in the cytoplasm. In terms of biological role, probable transcription factor, involved in meiosis and stress protection. The chain is Zinc finger protein dpff-1 from Caenorhabditis elegans.